Here is a 603-residue protein sequence, read N- to C-terminus: Prostaglandin G/H synthase 1 (603 aa).

A signal peptide spans 1-27 (MSRGSRLHRWPLLLLLLLLLPPPPVLP). One can recognise an EGF-like domain in the interval 35–73 (PVNPCCYYPCQHQGICVRFGLDRYQCDCTRTGYSGPNCT). 4 disulfides stabilise this stretch: Cys-39–Cys-50, Cys-40–Cys-162, Cys-44–Cys-60, and Cys-62–Cys-72. N-linked (GlcNAc...) asparagine glycosylation is found at Asn-71, Asn-107, and Asn-147. Residue His-210 is the Proton acceptor of the active site. Tyr-388 acts as the For cyclooxygenase activity in catalysis. Residue His-391 coordinates heme b. Cys-572 and Cys-578 are oxidised to a cystine.

Belongs to the prostaglandin G/H synthase family. As to quaternary structure, homodimer. It depends on heme b as a cofactor. In terms of processing, N-glycosylated. N-linked glycosylation is necessary for enzymatic activity. As to expression, brain cortex. Isoform 2 is expressed in the cerebral cortex and heart.

The protein localises to the microsome membrane. Its subcellular location is the endoplasmic reticulum membrane. The catalysed reaction is (5Z,8Z,11Z,14Z)-eicosatetraenoate + AH2 + 2 O2 = prostaglandin H2 + A + H2O. The enzyme catalyses (5Z,8Z,11Z,14Z)-eicosatetraenoate + 2 O2 = prostaglandin G2. It carries out the reaction prostaglandin G2 + AH2 = prostaglandin H2 + A + H2O. It catalyses the reaction (9Z,12Z)-octadecadienoate + AH2 + O2 = (9R)-hydroxy-(10E,12Z)-octadecadienoate + A + H2O. The catalysed reaction is (9Z,12Z)-octadecadienoate + AH2 + O2 = (9S)-hydroxy-(10E,12Z)-octadecadienoate + A + H2O. The enzyme catalyses (9Z,12Z)-octadecadienoate + AH2 + O2 = (13S)-hydroxy-(9Z,11E)-octadecadienoate + A + H2O. It carries out the reaction (9Z,12Z)-octadecadienoate + AH2 + O2 = (13R)-hydroxy-(9Z,11E)-octadecadienoate + A + H2O. It participates in lipid metabolism; prostaglandin biosynthesis. Its activity is regulated as follows. The cyclooxygenase activity is inhibited by nonsteroidal anti-inflammatory drugs (NSAIDs) including ibuprofen, flurbiprofen, ketoprofen, naproxen, flurbiprofen, anirolac, fenclofenac and diclofenac. In terms of biological role, dual cyclooxygenase and peroxidase that plays an important role in the biosynthesis pathway of prostanoids, a class of C20 oxylipins mainly derived from arachidonate ((5Z,8Z,11Z,14Z)-eicosatetraenoate, AA, C20:4(n-6)), with a particular role in the inflammatory response. The cyclooxygenase activity oxygenates AA to the hydroperoxy endoperoxide prostaglandin G2 (PGG2), and the peroxidase activity reduces PGG2 to the hydroxy endoperoxide prostaglandin H2 (PGH2), the precursor of all 2-series prostaglandins and thromboxanes. This complex transformation is initiated by abstraction of hydrogen at carbon 13 (with S-stereochemistry), followed by insertion of molecular O2 to form the endoperoxide bridge between carbon 9 and 11 that defines prostaglandins. The insertion of a second molecule of O2 (bis-oxygenase activity) yields a hydroperoxy group in PGG2 that is then reduced to PGH2 by two electrons. Involved in the constitutive production of prostanoids in particular in the stomach and platelets. In gastric epithelial cells, it is a key step in the generation of prostaglandins, such as prostaglandin E2 (PGE2), which plays an important role in cytoprotection. In platelets, it is involved in the generation of thromboxane A2 (TXA2), which promotes platelet activation and aggregation, vasoconstriction and proliferation of vascular smooth muscle cells. Can also use linoleate (LA, (9Z,12Z)-octadecadienoate, C18:2(n-6)) as substrate and produce hydroxyoctadecadienoates (HODEs) in a regio- and stereospecific manner, being (9R)-HODE ((9R)-hydroxy-(10E,12Z)-octadecadienoate) and (13S)-HODE ((13S)-hydroxy-(9Z,11E)-octadecadienoate) its major products. The protein is Prostaglandin G/H synthase 1 (PTGS1) of Canis lupus familiaris (Dog).